Consider the following 100-residue polypeptide: Elevenin-Vc1 (100 aa).

The first 24 residues, 1–24, serve as a signal peptide directing secretion; the sequence is MAPSQKALLVLVLSMLLTASDSWA. An intrachain disulfide couples Cys-29 to Cys-38. The propeptide occupies 44–100; that stretch reads KRGGDSLSVGGSAELDDALTDPFLRSEEPREWRELTRLSRVLQTFLSHPTGETEQHD.

This sequence belongs to the elevenin family. Monomer. Expressed by the venom duct.

It localises to the secreted. In terms of biological role, may mimic the function of prey elevenin neuropeptide. In vivo, intracranial injection in mice induces hyperactivity (tested at 5 and 10 nM). In Conus victoriae (Queen Victoria cone), this protein is Elevenin-Vc1.